A 697-amino-acid polypeptide reads, in one-letter code: Elongation factor G (697 aa).

Positions Glu-8–Leu-283 constitute a tr-type G domain. GTP-binding positions include Ala-17 to Thr-24, Asp-81 to His-85, and Asn-135 to Asp-138.

Belongs to the TRAFAC class translation factor GTPase superfamily. Classic translation factor GTPase family. EF-G/EF-2 subfamily.

The protein resides in the cytoplasm. Its function is as follows. Catalyzes the GTP-dependent ribosomal translocation step during translation elongation. During this step, the ribosome changes from the pre-translocational (PRE) to the post-translocational (POST) state as the newly formed A-site-bound peptidyl-tRNA and P-site-bound deacylated tRNA move to the P and E sites, respectively. Catalyzes the coordinated movement of the two tRNA molecules, the mRNA and conformational changes in the ribosome. In Koribacter versatilis (strain Ellin345), this protein is Elongation factor G.